Consider the following 73-residue polypeptide: MSYQQQQCKQPCQPPPVCPTPKCPEPCPPPKCPEPYLPPPCPPEHCPPPPCQDKCPPVQPYPPCQQKYPPKSK.

The span at 1 to 11 (MSYQQQQCKQP) shows a compositional bias: low complexity. The tract at residues 1 to 20 (MSYQQQQCKQPCQPPPVCPT) is disordered. 3 consecutive repeat copies span residues 21 to 29 (PKCPEPCPP), 30 to 38 (PKCPEPYLP), and 39 to 47 (PPCPPEHCP). The segment at 21–47 (PKCPEPCPPPKCPEPYLPPPCPPEHCP) is 3 X 9 AA approximate tandem repeats.

It belongs to the cornifin (SPRR) family.

The protein resides in the cytoplasm. Cross-linked envelope protein of keratinocytes. It is a keratinocyte protein that first appears in the cell cytosol, but ultimately becomes cross-linked to membrane proteins by transglutaminase. All that results in the formation of an insoluble envelope beneath the plasma membrane. This is Small proline-rich protein 2G (SPRR2G) from Homo sapiens (Human).